We begin with the raw amino-acid sequence, 338 residues long: 3-dehydroquinate synthase (338 aa).

This sequence belongs to the archaeal-type DHQ synthase family.

It catalyses the reaction 2-amino-2,3,7-trideoxy-D-lyxo-hept-6-ulosonate + NAD(+) + H2O = 3-dehydroquinate + NH4(+) + NADH + H(+). Functionally, catalyzes the oxidative deamination and cyclization of 2-amino-3,7-dideoxy-D-threo-hept-6-ulosonic acid (ADH) to yield 3-dehydroquinate (DHQ), which is fed into the canonical shikimic pathway of aromatic amino acid biosynthesis. The chain is 3-dehydroquinate synthase from Cenarchaeum symbiosum (strain A).